Here is a 541-residue protein sequence, read N- to C-terminus: Putative transferase YhbX (541 aa).

Topologically, residues 1–60 (MTVFNKFARSFKSHWLLYLSVIVFGITNLVASSGAHMVQRLLFFVLTILVVKRISSLPLR) are periplasmic. Residues 61 to 81 (LLVAAPFVLLTAADMSISLYS) form a helical membrane-spanning segment. Over 82–110 (WCTFGTTFNDGFAISVLQSDPDEVAKMLG) the chain is Cytoplasmic. Residues 111 to 131 (MYSPYLCAFAFLSLLFLAVII) form a helical membrane-spanning segment. Residues 132–141 (KYDVSLPTKK) are Periplasmic-facing. Residues 142–162 (VTGILLLIVISGSLFSACQFA) traverse the membrane as a helical segment. Residues 163–264 (YKDAKNKNAF…RKQIKLFNQA (102 aa)) lie on the Cytoplasmic side of the membrane. Residues 265–285 (ISGAPYTALSVPLSLTADSVL) traverse the membrane as a helical segment. At 286–541 (SHDIHNYPDN…QGNPTPEGQG (256 aa)) the chain is on the periplasmic side.

It belongs to the phosphoethanolamine transferase family.

Its subcellular location is the cell inner membrane. Functionally, there are several lipid A forms in this strain, including a phosphoethanolamine (1-O-P-pEtN) form; overexpression of this gene does not lead to higher levels of the 1-O-P-pEtN form of lipid A. This Escherichia coli O157:H7 protein is Putative transferase YhbX (yhbX).